Here is an 846-residue protein sequence, read N- to C-terminus: Choline trimethylamine-lyase (846 aa).

The PFL domain occupies 60-718 (PRHVKLKENF…LLGASANGRR (659 aa)). Cys489 serves as the catalytic Cysteine radical intermediate. The active-site Proton acceptor is Glu491. Residues 725–846 (DGISPTQGAD…IISRTMLHGF (122 aa)) enclose the Glycine radical domain. Gly821 is subject to Glycine radical.

The protein belongs to the glycyl radical enzyme (GRE) family. CutC subfamily. Homodimer. Requires the activating protein CutD to generate the key active site glycyl radical on Gly-821 that is involved in catalysis.

The enzyme catalyses choline = trimethylamine + acetaldehyde. It participates in amine and polyamine metabolism; choline degradation. Functionally, glycine radical enzyme that catalyzes the cleavage of a C-N bond in choline, producing trimethylamine (TMA) and acetaldehyde. Is involved in the anaerobic choline utilization pathway that allows D.alaskensis to grow on choline as a source of carbon and energy. Is strictly specific for choline as substrate. The sequence is that of Choline trimethylamine-lyase from Oleidesulfovibrio alaskensis (strain ATCC BAA-1058 / DSM 17464 / G20) (Desulfovibrio alaskensis).